A 385-amino-acid chain; its full sequence is Muconate cycloisomerase 1-2 (385 aa).

Residue lysine 171 is part of the active site. The Mn(2+) site is built by glutamate 226 and aspartate 251.

The protein belongs to the mandelate racemase/muconate lactonizing enzyme family. In terms of assembly, homooctamer. It depends on Mn(2+) as a cofactor.

The enzyme catalyses (S)-muconolactone = cis,cis-muconate + H(+). It functions in the pathway aromatic compound metabolism; beta-ketoadipate pathway; 5-oxo-4,5-dihydro-2-furylacetate from catechol: step 2/3. Catalyzes a syn cycloisomerization. This chain is Muconate cycloisomerase 1-2 (catB2), found in Acinetobacter lwoffii.